Consider the following 344-residue polypeptide: Heat-inducible transcription repressor HrcA (344 aa).

Belongs to the HrcA family.

Negative regulator of class I heat shock genes (grpE-dnaK-dnaJ and groELS operons). Prevents heat-shock induction of these operons. The chain is Heat-inducible transcription repressor HrcA from Moorella thermoacetica (strain ATCC 39073 / JCM 9320).